A 55-amino-acid polypeptide reads, in one-letter code: ATP synthase protein 8 (55 aa).

Residues 7 to 24 (NPWLFIMLMSWLTFSLII) form a helical membrane-spanning segment. The tract at residues 35–55 (NPPSNKTPTTTKTSPWTWPWT) is disordered. Over residues 37–55 (PSNKTPTTTKTSPWTWPWT) the composition is skewed to low complexity.

The protein belongs to the ATPase protein 8 family. As to quaternary structure, F-type ATPases have 2 components, CF(1) - the catalytic core - and CF(0) - the membrane proton channel.

The protein localises to the mitochondrion membrane. Its function is as follows. Mitochondrial membrane ATP synthase (F(1)F(0) ATP synthase or Complex V) produces ATP from ADP in the presence of a proton gradient across the membrane which is generated by electron transport complexes of the respiratory chain. F-type ATPases consist of two structural domains, F(1) - containing the extramembraneous catalytic core and F(0) - containing the membrane proton channel, linked together by a central stalk and a peripheral stalk. During catalysis, ATP synthesis in the catalytic domain of F(1) is coupled via a rotary mechanism of the central stalk subunits to proton translocation. Part of the complex F(0) domain. Minor subunit located with subunit a in the membrane. The polypeptide is ATP synthase protein 8 (MT-ATP8) (Corythaeola cristata (Great blue turaco)).